The primary structure comprises 176 residues: Ribosome rescue factor SmrB (176 aa).

Residues leucine 97–serine 172 form the Smr domain.

This sequence belongs to the SmrB family. In terms of assembly, associates with collided ribosomes, but not with correctly translating polysomes.

In terms of biological role, acts as a ribosome collision sensor. Detects stalled/collided disomes (pairs of ribosomes where the leading ribosome is stalled and a second ribosome has collided with it) and endonucleolytically cleaves mRNA at the 5' boundary of the stalled ribosome. Stalled/collided disomes form a new interface (primarily via the 30S subunits) that binds SmrB. Cleaved mRNA becomes available for tmRNA ligation, leading to ribosomal subunit dissociation and rescue of stalled ribosomes. The protein is Ribosome rescue factor SmrB of Vibrio vulnificus (strain YJ016).